Consider the following 232-residue polypeptide: MTNADPHELQKFSDLAHRWWDPNAEFKPLHDLNPVRLGWIDAHAHLAGKRALDIGCGGGILSESMAGLGAQVKGIDLSTEALGVADLHSLESGISVEYEAIAAEAIAAREPGTYDVVTCMEMLEHVPSPGDIVAACATLVKPGGWVFFSTLNRNLKSYLFAVIGAEYIAQMLPKGTHDYARFIRPSELASFVRATDLHIVEIKGITYHPIGKRFALSNDTDINYLVACRRGA.

S-adenosyl-L-methionine contacts are provided by R36, G55, D76, and M120.

This sequence belongs to the methyltransferase superfamily. UbiG/COQ3 family.

The enzyme catalyses a 3-demethylubiquinol + S-adenosyl-L-methionine = a ubiquinol + S-adenosyl-L-homocysteine + H(+). It carries out the reaction a 3-(all-trans-polyprenyl)benzene-1,2-diol + S-adenosyl-L-methionine = a 2-methoxy-6-(all-trans-polyprenyl)phenol + S-adenosyl-L-homocysteine + H(+). Its pathway is cofactor biosynthesis; ubiquinone biosynthesis. In terms of biological role, O-methyltransferase that catalyzes the 2 O-methylation steps in the ubiquinone biosynthetic pathway. In Burkholderia orbicola (strain MC0-3), this protein is Ubiquinone biosynthesis O-methyltransferase.